We begin with the raw amino-acid sequence, 207 residues long: Small ribosomal subunit protein uS4 (207 aa).

In terms of domain architecture, S4 RNA-binding spans 98–164 (RRLDNVVYRM…AKFKNLVEVN (67 aa)).

This sequence belongs to the universal ribosomal protein uS4 family. In terms of assembly, part of the 30S ribosomal subunit. Contacts protein S5. The interaction surface between S4 and S5 is involved in control of translational fidelity.

Its function is as follows. One of the primary rRNA binding proteins, it binds directly to 16S rRNA where it nucleates assembly of the body of the 30S subunit. With S5 and S12 plays an important role in translational accuracy. The sequence is that of Small ribosomal subunit protein uS4 from Clostridioides difficile (strain 630) (Peptoclostridium difficile).